A 65-amino-acid polypeptide reads, in one-letter code: DNA-directed RNA polymerase subunit Rpo10 (65 aa).

The Zn(2+) site is built by Cys-7, Cys-10, Cys-44, and Cys-45.

Belongs to the archaeal Rpo10/eukaryotic RPB10 RNA polymerase subunit family. Part of the RNA polymerase complex. The cofactor is Zn(2+).

It localises to the cytoplasm. The catalysed reaction is RNA(n) + a ribonucleoside 5'-triphosphate = RNA(n+1) + diphosphate. DNA-dependent RNA polymerase (RNAP) catalyzes the transcription of DNA into RNA using the four ribonucleoside triphosphates as substrates. This is DNA-directed RNA polymerase subunit Rpo10 from Nanoarchaeum equitans (strain Kin4-M).